We begin with the raw amino-acid sequence, 209 residues long: Zinc finger SWIM domain-containing protein sws1 (209 aa).

Positions 1 to 30 (MQQGHFTSNSYHSKTLNSSSLPVSSKFSHT) are enriched in polar residues. The interval 1–33 (MQQGHFTSNSYHSKTLNSSSLPVSSKFSHTNDP) is disordered. The SWIM-type zinc finger occupies 143-203 (TTIDLKYWYC…HILAASILRA (61 aa)).

Interacts with rdl1, rlp1 and srs2.

The protein resides in the cytoplasm. The protein localises to the nucleus. Its subcellular location is the nucleoplasm. Functionally, involved in early stages of the homologous recombination repair (HRR) pathway of double-stranded DNA breaks arising during DNA replication or induced by DNA-damaging agents. This chain is Zinc finger SWIM domain-containing protein sws1 (sws1), found in Schizosaccharomyces pombe (strain 972 / ATCC 24843) (Fission yeast).